The primary structure comprises 93 residues: Small ribosomal subunit protein uS19c (93 aa).

Belongs to the universal ribosomal protein uS19 family.

It is found in the plastid. The protein resides in the chloroplast. Protein S19 forms a complex with S13 that binds strongly to the 16S ribosomal RNA. The chain is Small ribosomal subunit protein uS19c from Zygnema circumcarinatum (Green alga).